A 410-amino-acid chain; its full sequence is MACTNNAMRALFLLVLFCIVHGEKEESKGIDAKASGPGGSFDITKLGASGNGKTDSTKAVQEAWASACGGTGKQTILIPKGDFLVGQLNFTGPCKGDVTIQVDGNLLATTDLSQYKDHGNWIEILRVDNLVITGKGNLDGQGPAVWSKNSCTKKYDCKILPNSLVMDFVNNGEVSGVTLLNSKFFHMNMYRCKDMLIKDVTVTAPGDSPNTDGIHMGDSSGITITNTVIGVGDDCISIGPGTSKVNITGVTCGPGHGISIGSLGRYKDEKDVTDINVKDCTLKKTMFGVRIKAYEDAASVLTVSKIHYENIKMEDSANPIFIDMKYCPNKLCTANGASKVTVKDVTFKNITGTSSTPEAVSLLCTAKVPCTGVTMDDVNVEYSGTNNKTMAICTNAKGSTKGCLKELACF.

Positions 1–22 are cleaved as a signal peptide; that stretch reads MACTNNAMRALFLLVLFCIVHG. N-linked (GlcNAc...) asparagine glycosylation occurs at asparagine 89. PbH1 repeat units lie at residues 192–218, 219–240, 242–262, 272–293, and 337–377; these read CKDMLIKDVTVTAPGDSPNTDGIHMGD, SSGITITNTVIGVGDDCISIGP, TSKVNITGVTCGPGHGISIGS, VTDINVKDCTLKKTMFGVRIKA, and ASKV…TMDD. Aspartate 233 functions as the Proton donor in the catalytic mechanism. A disulfide bridge links cysteine 235 with cysteine 252. The N-linked (GlcNAc...) asparagine glycan is linked to asparagine 246. Histidine 256 is a catalytic residue. Residue asparagine 349 is glycosylated (N-linked (GlcNAc...) asparagine). An intrachain disulfide couples cysteine 364 to cysteine 370. Asparagine 387 is a glycosylation site (N-linked (GlcNAc...) asparagine). The cysteines at positions 393 and 409 are disulfide-linked.

It belongs to the glycosyl hydrolase 28 family. In terms of tissue distribution, pollen.

The protein resides in the secreted. Its subcellular location is the cell wall. It catalyses the reaction [(1-&gt;4)-alpha-D-galacturonosyl](n) + H2O = alpha-D-galacturonate + [(1-&gt;4)-alpha-D-galacturonosyl](n-1). Functionally, may function in depolymerizing pectin during pollen development, germination, and tube growth. Acts as an exo-polygalacturonase. The sequence is that of Exopolygalacturonase (PG1) from Zea mays (Maize).